The following is a 271-amino-acid chain: S-adenosylmethionine decarboxylase proenzyme (271 aa).

The active-site Schiff-base intermediate with substrate; via pyruvic acid is serine 121. Serine 121 is modified (pyruvic acid (Ser); by autocatalysis). The Proton acceptor; for processing activity role is filled by histidine 126. The Proton donor; for catalytic activity role is filled by cysteine 149.

Belongs to the prokaryotic AdoMetDC family. Type 2 subfamily. As to quaternary structure, heterooctamer of four alpha and four beta chains arranged as a tetramer of alpha/beta heterodimers. Requires pyruvate as cofactor. In terms of processing, is synthesized initially as an inactive proenzyme. Formation of the active enzyme involves a self-maturation process in which the active site pyruvoyl group is generated from an internal serine residue via an autocatalytic post-translational modification. Two non-identical subunits are generated from the proenzyme in this reaction, and the pyruvate is formed at the N-terminus of the alpha chain, which is derived from the carboxyl end of the proenzyme. The post-translation cleavage follows an unusual pathway, termed non-hydrolytic serinolysis, in which the side chain hydroxyl group of the serine supplies its oxygen atom to form the C-terminus of the beta chain, while the remainder of the serine residue undergoes an oxidative deamination to produce ammonia and the pyruvoyl group blocking the N-terminus of the alpha chain.

The enzyme catalyses S-adenosyl-L-methionine + H(+) = S-adenosyl 3-(methylsulfanyl)propylamine + CO2. Its pathway is amine and polyamine biosynthesis; S-adenosylmethioninamine biosynthesis; S-adenosylmethioninamine from S-adenosyl-L-methionine: step 1/1. Catalyzes the decarboxylation of S-adenosylmethionine to S-adenosylmethioninamine (dcAdoMet), the propylamine donor required for the synthesis of the polyamines spermine and spermidine from the diamine putrescine. In Clostridium beijerinckii (strain ATCC 51743 / NCIMB 8052) (Clostridium acetobutylicum), this protein is S-adenosylmethionine decarboxylase proenzyme.